The sequence spans 388 residues: Succinate--CoA ligase [ADP-forming] subunit beta (388 aa).

In terms of domain architecture, ATP-grasp spans 9–245 (KELLASYGLP…KSQENERELK (237 aa)). ATP is bound by residues lysine 46, 53-55 (GRG), glutamate 100, tyrosine 103, and glutamate 108. Mg(2+) contacts are provided by asparagine 200 and aspartate 214. Substrate-binding positions include asparagine 265 and 322-324 (GIV).

It belongs to the succinate/malate CoA ligase beta subunit family. Heterotetramer of two alpha and two beta subunits. Mg(2+) is required as a cofactor.

The catalysed reaction is succinate + ATP + CoA = succinyl-CoA + ADP + phosphate. It carries out the reaction GTP + succinate + CoA = succinyl-CoA + GDP + phosphate. It participates in carbohydrate metabolism; tricarboxylic acid cycle; succinate from succinyl-CoA (ligase route): step 1/1. Succinyl-CoA synthetase functions in the citric acid cycle (TCA), coupling the hydrolysis of succinyl-CoA to the synthesis of either ATP or GTP and thus represents the only step of substrate-level phosphorylation in the TCA. The beta subunit provides nucleotide specificity of the enzyme and binds the substrate succinate, while the binding sites for coenzyme A and phosphate are found in the alpha subunit. This Neisseria gonorrhoeae (strain ATCC 700825 / FA 1090) protein is Succinate--CoA ligase [ADP-forming] subunit beta.